Consider the following 736-residue polypeptide: Zinc finger CCCH domain-containing protein 14 (736 aa).

An N-acetylmethionine modification is found at Met-1. 2 stretches are compositionally biased toward polar residues: residues 77–103 (TTEP…SNFS) and 131–145 (VSTS…NVRQ). The interval 77-145 (TTEPSSLKSS…QESKTTNVRQ (69 aa)) is disordered. Ser-85 carries the post-translational modification Phosphoserine. Residues Lys-99, Lys-139, Lys-175, and Lys-198 each participate in a glycyl lysine isopeptide (Lys-Gly) (interchain with G-Cter in SUMO2) cross-link. Ser-240 is subject to Phosphoserine. Lys-245 participates in a covalent cross-link: Glycyl lysine isopeptide (Lys-Gly) (interchain with G-Cter in SUMO2). Ser-281 is modified (phosphoserine). Residues Lys-283 and Lys-295 each participate in a glycyl lysine isopeptide (Lys-Gly) (interchain with G-Cter in SUMO2) cross-link. The disordered stretch occupies residues 310–350 (HDGEEEEEDDDYGSRTGSISSSVSVPAKPERRPSLPPSKQA). Ser-327 and Ser-343 each carry phosphoserine. Lys-357 carries the post-translational modification N6-acetyllysine; alternate. Lys-357 is covalently cross-linked (Glycyl lysine isopeptide (Lys-Gly) (interchain with G-Cter in SUMO2); alternate). Lys-378 is covalently cross-linked (Glycyl lysine isopeptide (Lys-Gly) (interchain with G-Cter in SUMO2)). 2 positions are modified to phosphoserine: Ser-390 and Ser-409. Residues 398-430 (VVQGQSRTPRISPPIKEEETKGDSVEKNQGTQQ) are disordered. Basic and acidic residues predominate over residues 412 to 423 (IKEEETKGDSVE). Lys-413 participates in a covalent cross-link: Glycyl lysine isopeptide (Lys-Gly) (interchain with G-Cter in SUMO2). Phosphoserine is present on Ser-421. Lys-489 participates in a covalent cross-link: Glycyl lysine isopeptide (Lys-Gly) (interchain with G-Cter in SUMO2). Residues Ser-498, Ser-515, Ser-527, and Ser-620 each carry the phosphoserine modification. 5 consecutive C3H1-type zinc fingers follow at residues 595–620 (EKLL…HPIS), 621–640 (PCKA…VHPN), 641–656 (CKYD…PFTH), 682–699 (CRYF…YHPK), and 701–719 (CRFN…HPTI).

Belongs to the ZC3H14 family. In terms of assembly, homodimer; facilitating circular RNAs (circRNAs) formation. Associates with the spliceosome. Interacts with HOOK2. Interacts with ZFC3H1 in a RNase-sensitive manner. As to expression, expressed in fetal and adult brain. Expressed in fetal and adult temporal lobe.

The protein resides in the nucleus speckle. It localises to the cytoplasm. Its function is as follows. RNA-binding protein involved in the biogenesis of circular RNAs (circRNAs), which are produced by back-splicing circularization of pre-mRNAs. Acts by binding to both exon-intron boundary and 3'-UTR of pre-mRNAs to promote circRNA biogenesis through dimerization and the association with the spliceosome. Required for spermatogenesis via involvement in circRNA biogenesis. Regulates the pre-mRNA processing of ATP5MC1; preventing its degradation. Also binds the poly(A) tail of mRNAs; controlling poly(A) length in neuronal cells. The polypeptide is Zinc finger CCCH domain-containing protein 14 (Homo sapiens (Human)).